We begin with the raw amino-acid sequence, 179 residues long: Repressor of phase 1 flagellin gene (179 aa).

Transcriptional repressor of the FliC phase-1 flagellin. The polypeptide is Repressor of phase 1 flagellin gene (fljA) (Salmonella abortus-equi).